A 332-amino-acid chain; its full sequence is Fructose-1,6-bisphosphatase class 1 (332 aa).

Residues E91, D112, L114, and D115 each coordinate Mg(2+). Residues 115-118 (DGSS), N208, Y241, and K271 contribute to the substrate site. E277 contributes to the Mg(2+) binding site.

The protein belongs to the FBPase class 1 family. In terms of assembly, homotetramer. The cofactor is Mg(2+).

It localises to the cytoplasm. The enzyme catalyses beta-D-fructose 1,6-bisphosphate + H2O = beta-D-fructose 6-phosphate + phosphate. It functions in the pathway carbohydrate biosynthesis; Calvin cycle. The polypeptide is Fructose-1,6-bisphosphatase class 1 (Chlorobium phaeobacteroides (strain DSM 266 / SMG 266 / 2430)).